Consider the following 729-residue polypeptide: Glycine--tRNA ligase (729 aa).

A mitochondrion-targeting transit peptide spans 1-33 (MPCLLPSLLRATRAALPLLSPPRVVAASASQRL). The WHEP-TRS domain occupies 53 to 109 (LLAPLRLAVRQQGDFVRKLKEDKAPQVDVDRAVAELKARKRVLEAKELALQPKDDIV). At Lys-194 the chain carries N6-acetyllysine. Residue Glu-289 coordinates glycine. ATP is bound by residues 321–323 (RNE) and 332–333 (RV). Glu-340 lines the glycine pocket. Tyr-443 is subject to Phosphotyrosine. 447 to 448 (EI) contacts ATP. Lys-491 is modified (N6-acetyllysine). 566-568 (EPS) is a glycine binding site. Arg-573 contributes to the ATP binding site. The residue at position 690 (Ser-690) is a Phosphoserine. Thr-726 carries the post-translational modification Phosphothreonine.

This sequence belongs to the class-II aminoacyl-tRNA synthetase family. Homodimer.

It localises to the cytoplasm. The protein resides in the mitochondrion. The protein localises to the cell projection. Its subcellular location is the axon. It is found in the secreted. It localises to the extracellular exosome. The enzyme catalyses tRNA(Gly) + glycine + ATP = glycyl-tRNA(Gly) + AMP + diphosphate. The catalysed reaction is 2 ATP + H(+) = P(1),P(4)-bis(5'-adenosyl) tetraphosphate + diphosphate. Functionally, catalyzes the ATP-dependent ligation of glycine to the 3'-end of its cognate tRNA, via the formation of an aminoacyl-adenylate intermediate (Gly-AMP). Also produces diadenosine tetraphosphate (Ap4A), a universal pleiotropic signaling molecule needed for cell regulation pathways, by direct condensation of 2 ATPs. Thereby, may play a special role in Ap4A homeostasis. The protein is Glycine--tRNA ligase (Gars1) of Mus musculus (Mouse).